The following is a 232-amino-acid chain: Flagellar L-ring protein (232 aa).

A signal peptide spans methionine 1–glycine 21. A lipid anchor (N-palmitoyl cysteine) is attached at cysteine 22. Residue cysteine 22 is the site of S-diacylglycerol cysteine attachment.

This sequence belongs to the FlgH family. In terms of assembly, the basal body constitutes a major portion of the flagellar organelle and consists of four rings (L,P,S, and M) mounted on a central rod.

It is found in the cell outer membrane. Its subcellular location is the bacterial flagellum basal body. Its function is as follows. Assembles around the rod to form the L-ring and probably protects the motor/basal body from shearing forces during rotation. This chain is Flagellar L-ring protein, found in Shigella boydii serotype 4 (strain Sb227).